We begin with the raw amino-acid sequence, 1070 residues long: Carbamoyl phosphate synthase large chain (1070 aa).

A carboxyphosphate synthetic domain region spans residues Met-1–Glu-401. Residues Arg-129, Arg-169, Gly-175, Gly-176, Lys-208, Ile-210, Glu-215, Gly-241, Ile-242, His-243, Gln-284, and Glu-298 each coordinate ATP. The 195-residue stretch at Arg-133–Val-327 folds into the ATP-grasp 1 domain. Residues Gln-284, Glu-298, and Asn-300 each coordinate Mg(2+). Gln-284, Glu-298, and Asn-300 together coordinate Mn(2+). Positions Ile-402–Ser-546 are oligomerization domain. The interval Thr-547–Gly-929 is carbamoyl phosphate synthetic domain. The region spanning Glu-671 to Leu-861 is the ATP-grasp 2 domain. ATP-binding residues include Arg-707, Arg-746, Val-748, Glu-752, Gly-777, Val-778, His-779, Ser-780, Gln-820, and Glu-832. Gln-820, Glu-832, and Asn-834 together coordinate Mg(2+). Gln-820, Glu-832, and Asn-834 together coordinate Mn(2+). The MGS-like domain occupies Thr-930–Val-1070. The tract at residues Thr-930–Val-1070 is allosteric domain.

This sequence belongs to the CarB family. In terms of assembly, composed of two chains; the small (or glutamine) chain promotes the hydrolysis of glutamine to ammonia, which is used by the large (or ammonia) chain to synthesize carbamoyl phosphate. Tetramer of heterodimers (alpha,beta)4. Mg(2+) is required as a cofactor. Requires Mn(2+) as cofactor.

It catalyses the reaction hydrogencarbonate + L-glutamine + 2 ATP + H2O = carbamoyl phosphate + L-glutamate + 2 ADP + phosphate + 2 H(+). The enzyme catalyses hydrogencarbonate + NH4(+) + 2 ATP = carbamoyl phosphate + 2 ADP + phosphate + 2 H(+). The protein operates within amino-acid biosynthesis; L-arginine biosynthesis; carbamoyl phosphate from bicarbonate: step 1/1. Its pathway is pyrimidine metabolism; UMP biosynthesis via de novo pathway; (S)-dihydroorotate from bicarbonate: step 1/3. Functionally, large subunit of the glutamine-dependent carbamoyl phosphate synthetase (CPSase). CPSase catalyzes the formation of carbamoyl phosphate from the ammonia moiety of glutamine, carbonate, and phosphate donated by ATP, constituting the first step of 2 biosynthetic pathways, one leading to arginine and/or urea and the other to pyrimidine nucleotides. The large subunit (synthetase) binds the substrates ammonia (free or transferred from glutamine from the small subunit), hydrogencarbonate and ATP and carries out an ATP-coupled ligase reaction, activating hydrogencarbonate by forming carboxy phosphate which reacts with ammonia to form carbamoyl phosphate. The protein is Carbamoyl phosphate synthase large chain of Listeria monocytogenes serotype 4b (strain F2365).